A 414-amino-acid chain; its full sequence is Esterase FrsA (414 aa).

The protein belongs to the FrsA family.

The catalysed reaction is a carboxylic ester + H2O = an alcohol + a carboxylate + H(+). In terms of biological role, catalyzes the hydrolysis of esters. This is Esterase FrsA from Escherichia coli O8 (strain IAI1).